Here is a 349-residue protein sequence, read N- to C-terminus: Interleukin-10 receptor subunit beta (349 aa).

An N-terminal signal peptide occupies residues 1 to 19 (MAPCVAGWLGGFLLVPALG). At 20–220 (MIPPPEKVRM…RTGNDEITPS (201 aa)) the chain is on the extracellular side. 2 consecutive Fibronectin type-III domains span residues 23–111 (PPEK…VEDT) and 112–215 (IIGP…TGND). Asparagine 49 carries an N-linked (GlcNAc...) asparagine glycan. Cysteines 66 and 74 form a disulfide. N-linked (GlcNAc...) asparagine glycosylation is found at asparagine 102, asparagine 161, and asparagine 199. An intrachain disulfide couples cysteine 188 to cysteine 209. The chain crosses the membrane as a helical span at residues 221–241 (WIVAIILIVSVLVVFLFLLGC). The Cytoplasmic portion of the chain corresponds to 242–349 (FVVLWLIYKK…PKLLTSTSEV (108 aa)). Serine 299 bears the Phosphoserine mark. The segment at 300 to 349 (EESEGSKQSPEDNCASEPPSDPGPRELESKDEAPSPPHDDPKLLTSTSEV) is disordered. A compositionally biased stretch (basic and acidic residues) spans 322–341 (GPRELESKDEAPSPPHDDPK).

Belongs to the type II cytokine receptor family. In terms of assembly, heterodimer with IFNLR1.

It localises to the membrane. Functionally, shared cell surface receptor required for the activation of five class 2 cytokines: IL10, IL22, IL26, IL28, and IFNL1. The IFNLR1/IL10RB dimer is a receptor for the cytokine ligands IFNL2 and IFNL3 and mediates their antiviral activity. The ligand/receptor complex stimulate the activation of the JAK/STAT signaling pathway leading to the expression of IFN-stimulated genes (ISG), which contribute to the antiviral state. The polypeptide is Interleukin-10 receptor subunit beta (Il10rb) (Mus musculus (Mouse)).